Reading from the N-terminus, the 423-residue chain is Glucoside xylosyltransferase 2 (423 aa).

Residues 1-6 (MRFRWK) lie on the Cytoplasmic side of the membrane. A helical; Signal-anchor for type II membrane protein transmembrane segment spans residues 7-26 (FFGSLLCVTGLLLVLYRQLG). Topologically, residues 27–423 (NVPQPPPGPA…RVVVHIRSDV (397 aa)) are lumenal. A disordered region spans residues 60–85 (RRDARQGGKKKTNWNNVRAPEQKPNP). Residues N215 and N256 are each glycosylated (N-linked (GlcNAc...) asparagine).

The protein belongs to the glycosyltransferase 8 family.

The protein localises to the membrane. The enzyme catalyses 3-O-(beta-D-glucosyl)-L-seryl-[EGF-like domain protein] + UDP-alpha-D-xylose = 3-O-[alpha-D-xylosyl-(1-&gt;3)-beta-D-glucosyl]-L-seryl-[EGF-like domain protein] + UDP + H(+). Glycosyltransferase which elongates the O-linked glucose attached to EGF-like repeats in the extracellular domain of Notch proteins by catalyzing the addition of xylose. This chain is Glucoside xylosyltransferase 2 (gxylt2), found in Xenopus laevis (African clawed frog).